A 105-amino-acid polypeptide reads, in one-letter code: Antitoxin YfjZ (105 aa).

It belongs to the CbeA/YafW/YfjZ antitoxin family.

Antitoxin component of a type IV toxin-antitoxin (TA) system. Antitoxin that counteracts the effect of cognate toxin YpjF. Also counteracts the effect of non-cognate toxins CbtA and YfkI. The chain is Antitoxin YfjZ (yfjZ) from Escherichia coli (strain K12).